Consider the following 349-residue polypeptide: tRNA N6-adenosine threonylcarbamoyltransferase (349 aa).

Fe cation-binding residues include His114 and His118. Substrate-binding positions include 136–140 (IMSGG), Asp169, Gly182, and Asn280. Asp308 is a binding site for Fe cation.

It belongs to the KAE1 / TsaD family. Fe(2+) serves as cofactor.

The protein resides in the cytoplasm. It carries out the reaction L-threonylcarbamoyladenylate + adenosine(37) in tRNA = N(6)-L-threonylcarbamoyladenosine(37) in tRNA + AMP + H(+). Required for the formation of a threonylcarbamoyl group on adenosine at position 37 (t(6)A37) in tRNAs that read codons beginning with adenine. Is involved in the transfer of the threonylcarbamoyl moiety of threonylcarbamoyl-AMP (TC-AMP) to the N6 group of A37, together with TsaE and TsaB. TsaD likely plays a direct catalytic role in this reaction. This chain is tRNA N6-adenosine threonylcarbamoyltransferase, found in Ehrlichia chaffeensis (strain ATCC CRL-10679 / Arkansas).